A 268-amino-acid polypeptide reads, in one-letter code: Imidazole glycerol phosphate synthase subunit HisF (268 aa).

Active-site residues include Asp-12 and Asp-131.

Belongs to the HisA/HisF family. As to quaternary structure, heterodimer of HisH and HisF.

It localises to the cytoplasm. The enzyme catalyses 5-[(5-phospho-1-deoxy-D-ribulos-1-ylimino)methylamino]-1-(5-phospho-beta-D-ribosyl)imidazole-4-carboxamide + L-glutamine = D-erythro-1-(imidazol-4-yl)glycerol 3-phosphate + 5-amino-1-(5-phospho-beta-D-ribosyl)imidazole-4-carboxamide + L-glutamate + H(+). It functions in the pathway amino-acid biosynthesis; L-histidine biosynthesis; L-histidine from 5-phospho-alpha-D-ribose 1-diphosphate: step 5/9. Its function is as follows. IGPS catalyzes the conversion of PRFAR and glutamine to IGP, AICAR and glutamate. The HisF subunit catalyzes the cyclization activity that produces IGP and AICAR from PRFAR using the ammonia provided by the HisH subunit. This Methanoculleus marisnigri (strain ATCC 35101 / DSM 1498 / JR1) protein is Imidazole glycerol phosphate synthase subunit HisF.